The chain runs to 840 residues: N-acetyltransferase ESCO1 (840 aa).

Residues methionine 1–glutamate 25 are compositionally biased toward basic and acidic residues. A disordered region spans residues methionine 1–glutamate 188. 3 stretches are compositionally biased toward polar residues: residues lysine 46 to asparagine 58, arginine 65 to alanine 74, and lysine 81 to glutamate 96. Basic and acidic residues predominate over residues valine 131 to glutamate 140. Residues isoleucine 141 to proline 153 are compositionally biased toward polar residues. Residues serine 161 to threonine 170 show a composition bias toward low complexity. Positions lysine 178 to glutamate 188 are enriched in basic and acidic residues. Serine 200 is modified (phosphoserine). Disordered regions lie at residues threonine 221 to arginine 300 and asparagine 318 to glutamate 338. The segment covering histidine 267–lysine 278 has biased composition (polar residues). The segment covering valine 319–glutamate 338 has biased composition (basic and acidic residues). Lysine 332 participates in a covalent cross-link: Glycyl lysine isopeptide (Lys-Gly) (interchain with G-Cter in SUMO2). Serine 412 is subject to Phosphoserine. Disordered stretches follow at residues alanine 486–aspartate 505 and threonine 542–serine 582. The segment covering alanine 551–serine 565 has biased composition (polar residues). A CCHH-type zinc finger spans residues valine 617–histidine 641. Acetyl-CoA is bound by residues isoleucine 772–valine 774, arginine 780–serine 785, and threonine 812–aspartate 814.

Belongs to the acetyltransferase family. ECO subfamily. In terms of assembly, the subunit structure is controversial. Monomer. Homodimer. Phosphorylated during mitosis, when associated with chromosomes. In terms of tissue distribution, widely expressed. Expressed in heart, brain, liver, placenta, lung, kidney and pancreas. Highly expressed in muscle.

The protein localises to the nucleus. It is found in the chromosome. The catalysed reaction is L-lysyl-[protein] + acetyl-CoA = N(6)-acetyl-L-lysyl-[protein] + CoA + H(+). Its function is as follows. Acetyltransferase required for the establishment of sister chromatid cohesion. Couples the processes of cohesion and DNA replication to ensure that only sister chromatids become paired together. In contrast to the structural cohesins, the deposition and establishment factors are required only during S phase. Acts by mediating the acetylation of cohesin component SMC3. This Homo sapiens (Human) protein is N-acetyltransferase ESCO1 (ESCO1).